Here is a 234-residue protein sequence, read N- to C-terminus: (5-formylfuran-3-yl)methyl phosphate synthase (234 aa).

Catalysis depends on Lys27, which acts as the Schiff-base intermediate with substrate. The active-site Proton acceptor is Lys85.

Belongs to the MfnB family.

It catalyses the reaction 2 D-glyceraldehyde 3-phosphate = 4-(hydroxymethyl)-2-furancarboxaldehyde phosphate + phosphate + 2 H2O. It participates in cofactor biosynthesis; methanofuran biosynthesis. Its function is as follows. Catalyzes the formation of 4-(hydroxymethyl)-2-furancarboxaldehyde phosphate (4-HFC-P) from two molecules of glyceraldehyde-3-P (GA-3-P). The chain is (5-formylfuran-3-yl)methyl phosphate synthase from Methanosarcina acetivorans (strain ATCC 35395 / DSM 2834 / JCM 12185 / C2A).